Here is a 427-residue protein sequence, read N- to C-terminus: 3-phosphoshikimate 1-carboxyvinyltransferase (427 aa).

3-phosphoshikimate-binding residues include Lys20, Ser21, and Arg25. Phosphoenolpyruvate is bound at residue Lys20. The phosphoenolpyruvate site is built by Gly92 and Arg120. 3-phosphoshikimate is bound by residues Ser166, Gln168, Asp312, and Lys339. Phosphoenolpyruvate is bound at residue Gln168. Asp312 serves as the catalytic Proton acceptor. Residues Arg343 and Arg385 each contribute to the phosphoenolpyruvate site.

Belongs to the EPSP synthase family. In terms of assembly, monomer.

The protein resides in the cytoplasm. It carries out the reaction 3-phosphoshikimate + phosphoenolpyruvate = 5-O-(1-carboxyvinyl)-3-phosphoshikimate + phosphate. It participates in metabolic intermediate biosynthesis; chorismate biosynthesis; chorismate from D-erythrose 4-phosphate and phosphoenolpyruvate: step 6/7. In terms of biological role, catalyzes the transfer of the enolpyruvyl moiety of phosphoenolpyruvate (PEP) to the 5-hydroxyl of shikimate-3-phosphate (S3P) to produce enolpyruvyl shikimate-3-phosphate and inorganic phosphate. This is 3-phosphoshikimate 1-carboxyvinyltransferase from Streptococcus thermophilus (strain ATCC BAA-250 / LMG 18311).